The primary structure comprises 295 residues: Mycothiol acetyltransferase (295 aa).

2 N-acetyltransferase domains span residues 5–141 (VEIR…TPLP) and 149–295 (VRLR…MYRR). E35 provides a ligand contact to 1D-myo-inositol 2-(L-cysteinylamino)-2-deoxy-alpha-D-glucopyranoside. Residue 76 to 78 (LVV) participates in acetyl-CoA binding. Positions 176, 215, and 229 each coordinate 1D-myo-inositol 2-(L-cysteinylamino)-2-deoxy-alpha-D-glucopyranoside. Acetyl-CoA is bound by residues 233–235 (VGV) and 240–246 (RGTGLGR). A 1D-myo-inositol 2-(L-cysteinylamino)-2-deoxy-alpha-D-glucopyranoside-binding site is contributed by Y267. An acetyl-CoA-binding site is contributed by 272-277 (NTAAVR).

This sequence belongs to the acetyltransferase family. MshD subfamily. As to quaternary structure, monomer.

It catalyses the reaction 1D-myo-inositol 2-(L-cysteinylamino)-2-deoxy-alpha-D-glucopyranoside + acetyl-CoA = mycothiol + CoA + H(+). Catalyzes the transfer of acetyl from acetyl-CoA to desacetylmycothiol (Cys-GlcN-Ins) to form mycothiol. The polypeptide is Mycothiol acetyltransferase (Thermobispora bispora (strain ATCC 19993 / DSM 43833 / CBS 139.67 / JCM 10125 / KCTC 9307 / NBRC 14880 / R51)).